Here is a 465-residue protein sequence, read N- to C-terminus: Ribulose bisphosphate carboxylase large chain (465 aa).

The residue at position 4 (Lys-4) is an N6,N6,N6-trimethyllysine. Residues Asn-113 and Thr-163 each coordinate substrate. Residue Lys-165 is the Proton acceptor of the active site. Lys-167 lines the substrate pocket. Residues Lys-191, Asp-193, and Glu-194 each coordinate Mg(2+). At Lys-191 the chain carries N6-carboxylysine. The Proton acceptor role is filled by His-284. Substrate is bound by residues Arg-285, His-317, and Ser-369.

The protein belongs to the RuBisCO large chain family. Type I subfamily. Heterohexadecamer of 8 large chains and 8 small chains. Mg(2+) serves as cofactor.

The protein resides in the plastid. The protein localises to the chloroplast. The catalysed reaction is 2 (2R)-3-phosphoglycerate + 2 H(+) = D-ribulose 1,5-bisphosphate + CO2 + H2O. It catalyses the reaction D-ribulose 1,5-bisphosphate + O2 = 2-phosphoglycolate + (2R)-3-phosphoglycerate + 2 H(+). Its function is as follows. RuBisCO catalyzes two reactions: the carboxylation of D-ribulose 1,5-bisphosphate, the primary event in carbon dioxide fixation, as well as the oxidative fragmentation of the pentose substrate in the photorespiration process. Both reactions occur simultaneously and in competition at the same active site. This is Ribulose bisphosphate carboxylase large chain from Sarracenia flava (Yellow pitcher plant).